A 213-amino-acid chain; its full sequence is Type II restriction enzyme BamHI (213 aa).

The Mg(2+) site is built by E77, D94, E111, and F112. E113 functions as the Proton acceptor in the catalytic mechanism.

In terms of assembly, homodimer. Mg(2+) is required as a cofactor.

It catalyses the reaction Endonucleolytic cleavage of DNA to give specific double-stranded fragments with terminal 5'-phosphates.. In terms of biological role, a P subtype restriction enzyme that recognizes the double-stranded sequence 5'-GGATCC-3' and cleaves after G-1. This chain is Type II restriction enzyme BamHI, found in Bacillus amyloliquefaciens (Bacillus velezensis).